Consider the following 917-residue polypeptide: DNA repair endonuclease XPF (917 aa).

The segment at 1–457 (MEPGLSGERR…EVWVNVRKGD (457 aa)) is helicase-like. Leucine-zipper stretches follow at residues 233-254 (LNACLKELKCHNPSLEVEDLSL) and 270-298 (LDPLWHQLGAKTKSLVQDLKILRTLLQYL). Lys289 carries the N6-acetyllysine modification. Basic and acidic residues predominate over residues 454–479 (RKGDGPKRTTKSDKRPKAAPNKERAS). Disordered regions lie at residues 454–524 (RKGD…SSPE) and 643–681 (VPEEREGRDETNLDLARGSAALDAPTDTRKAGGQEQNGT). Residues 487-492 (KRKKQE) carry the Nuclear localization signal motif. Residues 507 to 516 (EDKALEEDLC) are compositionally biased toward basic and acidic residues. Ser522 carries the post-translational modification Phosphoserine. Positions 643 to 653 (VPEEREGRDET) are enriched in basic and acidic residues. Residues 659 to 814 (RGSAALDAPT…PSPHATAELF (156 aa)) are nuclease. The 81-residue stretch at 684–764 (SIVVDMREFR…RPVLLIEFDP (81 aa)) folds into the ERCC4 domain. The residue at position 765 (Ser765) is a Phosphoserine. Residues 838–906 (TLPESDRYNP…QLHDFLHTAY (69 aa)) form a hhH2, dimerization with ERCC1 region. An N6-acetyllysine modification is found at Lys912.

It belongs to the XPF family. In terms of assembly, heterodimer composed of ERCC1 and ERCC4/XPF. Interacts with SLX4/BTBD12; this interaction is direct and links the ERCC1-ERCC4/XPF complex to SLX4, which may coordinate the action of the structure-specific endonuclease during DNA repair. The cofactor is Mg(2+). Acetylation at Lys-912 by KAT5 promotes interaction with ERCC1 by disrupting a salt bridge between Asp-908 and Lys-912, thereby exposing a second binding site for ERCC1. Deacetylated by SIRT1.

Its subcellular location is the nucleus. The protein resides in the chromosome. Functionally, catalytic component of a structure-specific DNA repair endonuclease responsible for the 5-prime incision during DNA repair, and which is essential for nucleotide excision repair (NER) and interstrand cross-link (ICL) repair. The sequence is that of DNA repair endonuclease XPF from Mus musculus (Mouse).